Here is a 346-residue protein sequence, read N- to C-terminus: tRNA N6-adenosine threonylcarbamoyltransferase (346 aa).

Fe cation is bound by residues His111 and His115. Residues 134-138 (LVSGG), Asp167, Gly180, and Asn279 each bind substrate. Asp307 contributes to the Fe cation binding site.

This sequence belongs to the KAE1 / TsaD family. Fe(2+) is required as a cofactor.

The protein resides in the cytoplasm. The enzyme catalyses L-threonylcarbamoyladenylate + adenosine(37) in tRNA = N(6)-L-threonylcarbamoyladenosine(37) in tRNA + AMP + H(+). Functionally, required for the formation of a threonylcarbamoyl group on adenosine at position 37 (t(6)A37) in tRNAs that read codons beginning with adenine. Is involved in the transfer of the threonylcarbamoyl moiety of threonylcarbamoyl-AMP (TC-AMP) to the N6 group of A37, together with TsaE and TsaB. TsaD likely plays a direct catalytic role in this reaction. In Burkholderia thailandensis (strain ATCC 700388 / DSM 13276 / CCUG 48851 / CIP 106301 / E264), this protein is tRNA N6-adenosine threonylcarbamoyltransferase.